Here is a 440-residue protein sequence, read N- to C-terminus: Glutamyl-tRNA(Gln) amidotransferase subunit D (440 aa).

The Asparaginase/glutaminase domain maps to 94–424; that stretch reads PSVTILGTGG…KEVRRMMLTN (331 aa). Residues Thr-104, Thr-180, Asp-181, and Lys-258 contribute to the active site.

This sequence belongs to the asparaginase 1 family. GatD subfamily. As to quaternary structure, heterodimer of GatD and GatE.

It catalyses the reaction L-glutamyl-tRNA(Gln) + L-glutamine + ATP + H2O = L-glutaminyl-tRNA(Gln) + L-glutamate + ADP + phosphate + H(+). Functionally, allows the formation of correctly charged Gln-tRNA(Gln) through the transamidation of misacylated Glu-tRNA(Gln) in organisms which lack glutaminyl-tRNA synthetase. The reaction takes place in the presence of glutamine and ATP through an activated gamma-phospho-Glu-tRNA(Gln). The GatDE system is specific for glutamate and does not act on aspartate. This chain is Glutamyl-tRNA(Gln) amidotransferase subunit D, found in Thermococcus kodakarensis (strain ATCC BAA-918 / JCM 12380 / KOD1) (Pyrococcus kodakaraensis (strain KOD1)).